A 145-amino-acid chain; its full sequence is 3-hydroxyacyl-[acyl-carrier-protein] dehydratase FabZ (145 aa).

Histidine 48 is a catalytic residue.

This sequence belongs to the thioester dehydratase family. FabZ subfamily.

The protein resides in the cytoplasm. The catalysed reaction is a (3R)-hydroxyacyl-[ACP] = a (2E)-enoyl-[ACP] + H2O. Involved in unsaturated fatty acids biosynthesis. Catalyzes the dehydration of short chain beta-hydroxyacyl-ACPs and long chain saturated and unsaturated beta-hydroxyacyl-ACPs. This Saccharophagus degradans (strain 2-40 / ATCC 43961 / DSM 17024) protein is 3-hydroxyacyl-[acyl-carrier-protein] dehydratase FabZ.